Here is a 323-residue protein sequence, read N- to C-terminus: Galectin-4 (323 aa).

Galectin domains are found at residues 19–150 and 194–323; these read YYKP…INFI and YKTR…YVQI. 256–262 contacts a beta-D-galactoside; sequence WGAEERK.

Monomer.

Its function is as follows. Galectin that binds lactose and a related range of sugars. May be involved in the assembly of adherens junctions. In Sus scrofa (Pig), this protein is Galectin-4 (LGALS4).